The sequence spans 122 residues: Large ribosomal subunit protein bL12 (122 aa).

The protein belongs to the bacterial ribosomal protein bL12 family. Homodimer. Part of the ribosomal stalk of the 50S ribosomal subunit. Forms a multimeric L10(L12)X complex, where L10 forms an elongated spine to which 2 to 4 L12 dimers bind in a sequential fashion. Binds GTP-bound translation factors.

Forms part of the ribosomal stalk which helps the ribosome interact with GTP-bound translation factors. Is thus essential for accurate translation. In Yersinia enterocolitica serotype O:8 / biotype 1B (strain NCTC 13174 / 8081), this protein is Large ribosomal subunit protein bL12.